Here is a 126-residue protein sequence, read N- to C-terminus: Small ribosomal subunit protein uS8 (126 aa).

This sequence belongs to the universal ribosomal protein uS8 family. Part of the 30S ribosomal subunit. Contacts proteins S5 and S12.

Its function is as follows. One of the primary rRNA binding proteins, it binds directly to 16S rRNA central domain where it helps coordinate assembly of the platform of the 30S subunit. The protein is Small ribosomal subunit protein uS8 of Nitratidesulfovibrio vulgaris (strain ATCC 29579 / DSM 644 / CCUG 34227 / NCIMB 8303 / VKM B-1760 / Hildenborough) (Desulfovibrio vulgaris).